Consider the following 450-residue polypeptide: Salicylate synthase (450 aa).

The active-site Proton donor is Glu252. 270 to 271 (GT) serves as a coordination point for substrate. Glu297 is a Mg(2+) binding site. Substrate contacts are provided by residues Tyr385, Arg405, and 419 to 421 (GAG). Residues Glu431 and Glu434 each coordinate Mg(2+). Lys438 provides a ligand contact to substrate.

Belongs to the anthranilate synthase component I family. Salicylate synthase subfamily. As to quaternary structure, monomer. Requires Mg(2+) as cofactor.

The catalysed reaction is chorismate = isochorismate. The enzyme catalyses isochorismate = salicylate + pyruvate. It catalyses the reaction chorismate = prephenate. It functions in the pathway siderophore biosynthesis; mycobactin biosynthesis. In terms of biological role, involved in the incorporation of salicylate into the virulence-conferring salicylate-based siderophore mycobactin. Catalyzes the initial conversion of chorismate to yield the intermediate isochorismate (isochorismate synthase activity), and the subsequent elimination of the enolpyruvyl side chain in a lyase reaction to give salicylate (isochorismate pyruvate-lyase activity). In the absence of magnesium, MbtI displays a chorismate mutase activity and converts chorismate to prephenate. This chain is Salicylate synthase (mbtI), found in Mycobacterium bovis (strain ATCC BAA-935 / AF2122/97).